The sequence spans 256 residues: Small ribosomal subunit protein bS18m (256 aa).

The segment at 19–106 (GQRTAQFSTT…GGQRYGSNSQ (88 aa)) is disordered. A compositionally biased stretch (polar residues) spans 21–30 (RTAQFSTTSP). Positions 44-66 (NAPRTNTNTSSPSSNNNNNAGSS) are enriched in low complexity.

This sequence belongs to the bacterial ribosomal protein bS18 family. In terms of assembly, component of the mitochondrial small ribosomal subunit (mt-SSU). Mature N.crassa 74S mitochondrial ribosomes consist of a small (37S) and a large (54S) subunit. The 37S small subunit contains a 16S ribosomal RNA (16S mt-rRNA) and 32 different proteins. The 54S large subunit contains a 23S rRNA (23S mt-rRNA) and 42 different proteins.

It localises to the mitochondrion. In terms of biological role, component of the mitochondrial ribosome (mitoribosome), a dedicated translation machinery responsible for the synthesis of mitochondrial genome-encoded proteins, including at least some of the essential transmembrane subunits of the mitochondrial respiratory chain. The mitoribosomes are attached to the mitochondrial inner membrane and translation products are cotranslationally integrated into the membrane. The chain is Small ribosomal subunit protein bS18m (rsm18) from Neurospora crassa (strain ATCC 24698 / 74-OR23-1A / CBS 708.71 / DSM 1257 / FGSC 987).